Here is a 211-residue protein sequence, read N- to C-terminus: Imidazole glycerol phosphate synthase subunit HisH (211 aa).

Residues 3–211 (VVAVIDYEMG…VSQVREKIAA (209 aa)) form the Glutamine amidotransferase type-1 domain. C81 serves as the catalytic Nucleophile. Active-site residues include H186 and E188.

As to quaternary structure, heterodimer of HisH and HisF.

Its subcellular location is the cytoplasm. It carries out the reaction 5-[(5-phospho-1-deoxy-D-ribulos-1-ylimino)methylamino]-1-(5-phospho-beta-D-ribosyl)imidazole-4-carboxamide + L-glutamine = D-erythro-1-(imidazol-4-yl)glycerol 3-phosphate + 5-amino-1-(5-phospho-beta-D-ribosyl)imidazole-4-carboxamide + L-glutamate + H(+). The enzyme catalyses L-glutamine + H2O = L-glutamate + NH4(+). It functions in the pathway amino-acid biosynthesis; L-histidine biosynthesis; L-histidine from 5-phospho-alpha-D-ribose 1-diphosphate: step 5/9. Functionally, IGPS catalyzes the conversion of PRFAR and glutamine to IGP, AICAR and glutamate. The HisH subunit catalyzes the hydrolysis of glutamine to glutamate and ammonia as part of the synthesis of IGP and AICAR. The resulting ammonia molecule is channeled to the active site of HisF. The sequence is that of Imidazole glycerol phosphate synthase subunit HisH from Nostoc sp. (strain PCC 7120 / SAG 25.82 / UTEX 2576).